The chain runs to 209 residues: Thymidine kinase (209 aa).

Residues serine 9 to threonine 16 and aspartate 88 to glutamine 91 each bind ATP. Glutamate 89 functions as the Proton acceptor in the catalytic mechanism.

Belongs to the thymidine kinase family. As to quaternary structure, homotetramer.

It is found in the cytoplasm. It catalyses the reaction thymidine + ATP = dTMP + ADP + H(+). In Xanthomonas campestris pv. campestris (strain 8004), this protein is Thymidine kinase.